Here is a 261-residue protein sequence, read N- to C-terminus: uncharacterized protein (261 aa).

One can recognise an N-acetyltransferase domain in the interval 135–261; the sequence is LVLKRIDEDI…VTEYTIYYSG (127 aa).

The protein belongs to the acetyltransferase family.

This is an uncharacterized protein from Bacillus subtilis (strain 168).